Here is a 685-residue protein sequence, read N- to C-terminus: Coiled-coil domain-containing protein 8 homolog (685 aa).

Residues 93–127 (VGTYDSSNGSDSELSDFDTSKVKGNRSSSGRTRKV) are disordered. Residues Ser142 and Ser146 each carry the phosphoserine modification. Disordered stretches follow at residues 207-263 (QRVK…GTRR), 281-538 (VPPF…KAEA), 558-579 (QRAE…TGAT), and 599-623 (REEA…KQVK). Residues 219–228 (EVGQTQQAST) show a composition bias toward polar residues. The span at 246–256 (DSSRNTGDRSD) shows a compositional bias: basic and acidic residues. 4 stretches are compositionally biased toward low complexity: residues 299–329 (AENQ…PRAE), 337–353 (EAVA…PRAE), 361–401 (EAAA…PRAE), and 409–420 (EAAASPIAEAAA). The span at 425-440 (ELVDSPRAETAADPRA) shows a compositional bias: basic and acidic residues. The segment covering 458 to 468 (AAASPIAEAAA) has biased composition (low complexity). Basic and acidic residues predominate over residues 473–488 (ELVDSPRAETAADPRA). Over residues 505–519 (EVAASPRAEAAASPR) the composition is skewed to low complexity. Residues 558–567 (QRAEAIDSQR) are compositionally biased toward basic and acidic residues. The segment covering 611 to 622 (SAGSGSRAQKQV) has biased composition (polar residues). A PxLPxI/L motif; mediates interaction with ANKRA2 motif is present at residues 647-653 (PRLPTLP).

As to quaternary structure, component of the 3M complex, composed of core components CUL7, CCDC8 and OBSL1. Interacts (via PxLPxI/L motif) with ANKRA2 (via ankyrin repeats); may link the 3M complex to histone deacetylases including HDAC4 and HDAC5.

Its subcellular location is the cytoplasm. The protein localises to the cytoskeleton. It localises to the microtubule organizing center. It is found in the centrosome. In terms of biological role, core component of the 3M complex, a complex required to regulate microtubule dynamics and genome integrity. It is unclear how the 3M complex regulates microtubules, it could act by controlling the level of a microtubule stabilizer. Required for localization of CUL7 to the centrosome. This chain is Coiled-coil domain-containing protein 8 homolog (Ccdc8), found in Mus musculus (Mouse).